The primary structure comprises 740 residues: Leucine-rich repeat neuronal protein 4 (740 aa).

The N-terminal stretch at 1–18 is a signal peptide; it reads MRQTLPLLLLTVLRPSWA. Residues 19–679 are Extracellular-facing; the sequence is DPPQEKVPLF…PCAAFTTKPS (661 aa). Asparagine 42 is a glycosylation site (N-linked (GlcNAc...) asparagine). 10 LRR repeats span residues 51–74, 75–97, 98–123, 125–144, 145–168, 174–197, 203–226, 228–251, 253–276, and 277–300; these read LPAA…GCLP, RTLR…ELGH, LEQL…GPAG, HTLD…TGPA, LSSL…AFAC, LLNL…AFAG, LVTL…WIRD, PKLT…IFKM, PNLQ…IFQD, and TPHL…TLDS. The N-linked (GlcNAc...) asparagine glycan is linked to asparagine 176. N-linked (GlcNAc...) asparagine glycans are attached at residues asparagine 289, asparagine 379, and asparagine 442. The tract at residues 389 to 517 is disordered; sequence VAPSAAPATR…QAPNPSLSEG (129 aa). Composition is skewed to polar residues over residues 430–454 and 490–514; these read APST…STTR and WDRS…NPSL. Residues 579–679 form the Fibronectin type-III domain; it reads IPDPPRLQGV…PCAAFTTKPS (101 aa). A glycan (N-linked (GlcNAc...) asparagine) is linked at asparagine 622. Residues 680–700 traverse the membrane as a helical segment; sequence FALLLSGLCAASGLLLASTVV. At 701–740 the chain is on the cytoplasmic side; that stretch reads LSACLCRRGQTLGLQRCDTHLVAYKNPAFDDYPLGLQTVS.

It localises to the membrane. May play an important role in hippocampus-dependent long-lasting memory. The sequence is that of Leucine-rich repeat neuronal protein 4 (LRRN4) from Homo sapiens (Human).